Reading from the N-terminus, the 528-residue chain is Exodeoxyribonuclease 7 large subunit (528 aa).

The segment at 486–528 is disordered; the sequence is QGDRDAVIDGESSGVLPPSAAPAPTRPTPRPKPASSSDQGSLF. Positions 504–517 are enriched in pro residues; it reads SAAPAPTRPTPRPK.

The protein belongs to the XseA family. In terms of assembly, heterooligomer composed of large and small subunits.

The protein localises to the cytoplasm. The catalysed reaction is Exonucleolytic cleavage in either 5'- to 3'- or 3'- to 5'-direction to yield nucleoside 5'-phosphates.. Bidirectionally degrades single-stranded DNA into large acid-insoluble oligonucleotides, which are then degraded further into small acid-soluble oligonucleotides. The polypeptide is Exodeoxyribonuclease 7 large subunit (Caulobacter sp. (strain K31)).